The chain runs to 239 residues: Pentatricopeptide repeat-containing protein DWY1, chloroplastic (239 aa).

Residues M1–R35 constitute a chloroplast transit peptide. Disordered stretches follow at residues A40–S59 and H101–E122. The segment covering V111–E122 has biased composition (basic and acidic residues). The type E(+) motif stretch occupies residues G113–R144. Positions D145 to W239 are type DYW motif.

It belongs to the PPR family. PCMP-H subfamily. In terms of assembly, interacts with CRR4. Zn(2+) is required as a cofactor.

Its subcellular location is the plastid. The protein resides in the chloroplast. In terms of biological role, plays a major role in single RNA editing events in chloroplasts. Acts as a site-recognition transacting factor involved in the edition of the site 1 of ndhD (ndhD-1 site corresponding to cytidine-2), which is a plastid-encoded subunit of the NADH-plastoquinone oxidoreductase. The interaction with CRR4 is required for its function in editing the ndhD-1 site. This chain is Pentatricopeptide repeat-containing protein DWY1, chloroplastic, found in Arabidopsis thaliana (Mouse-ear cress).